Reading from the N-terminus, the 817-residue chain is V-type proton ATPase subunit a1 (817 aa).

The Cytoplasmic portion of the chain corresponds to 1 to 422; that stretch reads MEEFLDKLPQ…PAVYSVVTYP (422 aa). The stretch at 97-133 forms a coiled coil; sequence DIALGDLERQLADHEHEVLEMNSNSEKLRQTYNELLE. The chain crosses the membrane as a helical span at residues 423 to 443; sequence FLFAVMFGDWGHGLCLLLGAL. At 444-468 the chain is on the vacuolar side; that stretch reads YLLARERKLSTQKLGSFMEMLFGGR. Residues 469-489 form a helical membrane-spanning segment; it reads YVILLMALFSIYCGLIYNEFF. The Cytoplasmic portion of the chain corresponds to 490–547; sequence SVPFHIFGGSAYKCRDTTCSDAYTVGLIKYRDPYPFGVDPSWRGSRTELPYLNSLKMK. The helical transmembrane segment at 548-568 threads the bilayer; it reads MSILLGIAQMNLGLILSFFNA. The Vacuolar segment spans residues 569–580; sequence RFFGSSLDIRYQ. Residues 581–601 traverse the membrane as a helical segment; that stretch reads FIPQMIFLNSLFGYLSLLIII. The Cytoplasmic segment spans residues 602-639; the sequence is KWCTGSQADLYHVMIYMFLSPTEELGENELFWGQRPLQ. A helical membrane pass occupies residues 640 to 660; sequence IVLLLLAFIAVPWMLFPKPFA. Residues 661–758 are Vacuolar-facing; that stretch reads LRKIHMERFQ…VLLLAWGYEN (98 aa). Residues 759–779 traverse the membrane as a helical segment; it reads ILIRLIGVAVFAFATAFILLM. At 780-817 the chain is on the cytoplasmic side; that stretch reads METLSAFLHALRLHWVEFMGKFFNGDGYKFKPFSFALI.

Belongs to the V-ATPase 116 kDa subunit family. In terms of assembly, V-ATPase is a heteromultimeric enzyme composed of a peripheral catalytic V1 complex (components A to H) attached to an integral membrane V0 proton pore complex (components: a, c, c'', d and e).

It localises to the vacuole membrane. It is found in the golgi apparatus. The protein localises to the trans-Golgi network membrane. Its function is as follows. Essential component of the vacuolar proton pump (V-ATPase), a multimeric enzyme that catalyzes the translocation of protons across the membranes. Required for assembly and activity of the V-ATPase. Required during cell expansion. The protein is V-type proton ATPase subunit a1 of Arabidopsis thaliana (Mouse-ear cress).